Consider the following 2458-residue polypeptide: Highly reducing polyketide synthase alnA (2458 aa).

In terms of domain architecture, Ketosynthase family 3 (KS3) spans 48-473 (TMPIAIVGMA…GANAHVILDD (426 aa)). Residues Cys221, His356, and His396 each act as for beta-ketoacyl synthase activity in the active site. The segment at 488-515 (HTTLSESEDSSDSGLEMDSSTSDSGEGQ) is disordered. Residues 499-515 (DSGLEMDSSTSDSGEGQ) are compositionally biased toward low complexity. A malonyl-CoA:ACP transacylase (MAT) domain region spans residues 609 to 932 (VFTGQGAQWP…PYMSVLSRGK (324 aa)). Ser697 (for malonyltransferase activity) is an active-site residue. The interval 1000–1130 (NDLLGVPVAQ…GSFSLHYEDA (131 aa)) is N-terminal hotdog fold. The PKS/mFAS DH domain occupies 1000 to 1307 (NDLLGVPVAQ…VTEVSAGAST (308 aa)). The segment at 1001-1305 (DLLGVPVAQQ…MTVTEVSAGA (305 aa)) is dehydratase (DH) domain. His1032 functions as the Proton acceptor; for dehydratase activity in the catalytic mechanism. A C-terminal hotdog fold region spans residues 1148 to 1307 (TRACRKLDVE…VTEVSAGAST (160 aa)). The active-site Proton donor; for dehydratase activity is the Asp1218. An enoylreductase (ER) domain region spans residues 1740–2051 (GSPSQARWVP…GQQQHERVAA (312 aa)). Residues 2076–2264 (KPDATYILAG…VTDASHFNEN (189 aa)) form a ketoreductase (KR) domain region. Positions 2359-2441 (STTVAQAHEV…RLALKIVSKS (83 aa)) constitute a Carrier domain. O-(pantetheine 4'-phosphoryl)serine is present on Ser2401.

It participates in polyketide biosynthesis. In terms of biological role, highly reducing polyketide synthase; part of the gene cluster that mediates the biosynthesis of asperlin, a polyketide showing anti-inflammatory, antitumor and antibiotic activities. The first step of the asperlin biosynthesis is the production of the intermediate 2,4,6-octatrienoic acid by the highly redusing polyketide synthase alnA with cleavage of the PKS product by the esterase alnB. 2,4,6-octatrienoic acid is further converted to asperlin via several steps involving the remaining enzymes from the cluster. The protein is Highly reducing polyketide synthase alnA of Emericella nidulans (strain FGSC A4 / ATCC 38163 / CBS 112.46 / NRRL 194 / M139) (Aspergillus nidulans).